Reading from the N-terminus, the 250-residue chain is Orotidine 5'-phosphate decarboxylase (250 aa).

Substrate-binding positions include Asp-9, Lys-40, 67-76 (DLKFHDIPNT), Thr-132, Arg-190, Gln-204, Gly-224, and Arg-225. The active-site Proton donor is Lys-69.

Belongs to the OMP decarboxylase family. Type 1 subfamily. In terms of assembly, homodimer.

It carries out the reaction orotidine 5'-phosphate + H(+) = UMP + CO2. It functions in the pathway pyrimidine metabolism; UMP biosynthesis via de novo pathway; UMP from orotate: step 2/2. Catalyzes the decarboxylation of orotidine 5'-monophosphate (OMP) to uridine 5'-monophosphate (UMP). This Nitratidesulfovibrio vulgaris (strain DSM 19637 / Miyazaki F) (Desulfovibrio vulgaris) protein is Orotidine 5'-phosphate decarboxylase.